The primary structure comprises 142 residues: Large ribosomal subunit protein uL13 (142 aa).

The protein belongs to the universal ribosomal protein uL13 family. Part of the 50S ribosomal subunit.

This protein is one of the early assembly proteins of the 50S ribosomal subunit, although it is not seen to bind rRNA by itself. It is important during the early stages of 50S assembly. This is Large ribosomal subunit protein uL13 from Cronobacter sakazakii (strain ATCC BAA-894) (Enterobacter sakazakii).